We begin with the raw amino-acid sequence, 567 residues long: Thiol:disulfide interchange protein DsbD (567 aa).

The N-terminal stretch at 1 to 19 (MAQRIFTLILLLCSTSAFA) is a signal peptide. Cystine bridges form between cysteine 122–cysteine 128 and cysteine 185–cysteine 307. The next 7 membrane-spanning stretches (helical) occupy residues 170–192 (ALWA…MYPL), 212–234 (LAFI…VAAA), 246–268 (YVLI…LFTL), 297–319 (GAIA…LLYI), 326–348 (WLGG…LVTV), 358–380 (GPWM…VFLL), and 387–409 (AWGL…ITSL). Residues 435 to 567 (QDWAFGSPSA…FSAHLHDRQP (133 aa)) form the Thioredoxin domain. A disulfide bond links cysteine 482 and cysteine 485.

It belongs to the thioredoxin family. DsbD subfamily.

The protein localises to the cell inner membrane. The enzyme catalyses [protein]-dithiol + NAD(+) = [protein]-disulfide + NADH + H(+). It catalyses the reaction [protein]-dithiol + NADP(+) = [protein]-disulfide + NADPH + H(+). In terms of biological role, required to facilitate the formation of correct disulfide bonds in some periplasmic proteins and for the assembly of the periplasmic c-type cytochromes. Acts by transferring electrons from cytoplasmic thioredoxin to the periplasm. This transfer involves a cascade of disulfide bond formation and reduction steps. In Salmonella typhi, this protein is Thiol:disulfide interchange protein DsbD.